We begin with the raw amino-acid sequence, 426 residues long: Inhibin beta A chain (426 aa).

The N-terminal stretch at 1–20 (MPLLWLRGFLLASCWIIVKS) is a signal peptide. The propeptide occupies 21-310 (SPTPGSEGHS…EDHPHRRRRR (290 aa)). Asn-165 carries an N-linked (GlcNAc...) asparagine glycan. A compositionally biased stretch (polar residues) spans 177–186 (QQQKHPQGSS). Disordered regions lie at residues 177–201 (QQQKHPQGSSDTREEAEEADLMEER) and 260–291 (KKKKEEEGEGKKKDGGEAGAGVDEEKEQSHRP). Over residues 263-275 (KEEEGEGKKKDGG) the composition is skewed to basic and acidic residues. Cystine bridges form between Cys-314/Cys-322, Cys-321/Cys-391, Cys-350/Cys-423, and Cys-354/Cys-425.

It belongs to the TGF-beta family. Dimeric, linked by one or more disulfide bonds. Inhibin A is a dimer of alpha/INHA and beta-A/INHBA. Activin A is a homodimer of beta-A/INHBA. Activin AB is a dimer of beta-A/INHBA and beta-B/INHBB. Interacts with FST and FSTL3; these interactions prevent activin A interaction to its type II receptor. Activin A interacts with ACVR2A. Activin A interacts with BMPR2. Inhibin A interacts with ACVR1; this interaction creates a non-signaling complex (NSC) that inhibits ACVR1-mediated BMP signaling. Inhibin A interacts with ACVR2A.

Its subcellular location is the secreted. Functionally, inhibins/activins are involved in regulating a number of diverse functions such as hypothalamic and pituitary hormone secretion, gonadal hormone secretion, germ cell development and maturation, erythroid differentiation, insulin secretion, nerve cell survival, embryonic axial development or bone growth, depending on their subunit composition. Its function is as follows. Activin A is a homodimer of INHBA that plays a role in several essential biological processes including embryonic development, stem cell maintenance and differentiation, haematopoiesis, cell proliferation and tissue fibrosis. Signals through type I (such as ACVR1B or ACVR1C) and type II receptors (such as ACVR2A, ACVR2B or BMPR2) which, upon ligand binding, phosphorylate SMAD2 and SMAD3 intracellular signaling mediators that form a complex with SMAD4, translocate to the nucleus and modulate gene expression. Can also activate alternative non-canonical intracellular signaling pathways including the p38 MAPK, extracellular signal-regulated kinases 1/2 (ERK1/2) and c-Jun N-terminal kinases (JNKs) to modulate cell migration and differentiation. Alternatively, promotes osteoblastic differentiation via ACVRL1-SMAD1/5/9 pathway. In addition, can engage the type I receptor ACVR1 to form an ACVR1-activin A-type II receptor non-signaling complex (NSC) that renders receptors unavailable for engagement with BMPs, hence resulting in an apparent inhibition of ACVR1-mediated BMP signaling. In terms of biological role, inhibin A is a dimer of alpha/INHA and beta-A/INHBA that functions as a feedback regulator in the hypothalamic-pituitary-gonadal (HPG) axis. Inhibits the secretion of FSH from the anterior pituitary gland by acting on pituitary gonadotrope cells. Antagonizes activin A by binding to the proteoglycan, betaglycan, and forming a stable complex with and, thereby, sequestering type II activin receptors while excluding type I receptor. This is Inhibin beta A chain (INHBA) from Equus caballus (Horse).